A 74-amino-acid chain; its full sequence is Sodium channel neurotoxin MeuNaTxalpha-6 (74 aa).

The first 7 residues, 1–7, serve as a signal peptide directing secretion; it reads LMTGVES. Residues 9–73 form the LCN-type CS-alpha/beta domain; it reads RDAYIAKPHN…VPIRIPGKCH (65 aa). Disulfide bonds link Cys-19–Cys-72, Cys-23–Cys-45, Cys-31–Cys-55, and Cys-35–Cys-57. A propeptide (removed by a carboxypeptidase) is located at residue Arg-74.

The protein belongs to the long (4 C-C) scorpion toxin superfamily. Sodium channel inhibitor family. Alpha subfamily. In terms of tissue distribution, expressed by the venom gland.

Its subcellular location is the secreted. Its function is as follows. Alpha toxins bind voltage-independently at site-3 of sodium channels (Nav) and inhibit the inactivation of the activated channels, thereby blocking neuronal transmission. The chain is Sodium channel neurotoxin MeuNaTxalpha-6 from Mesobuthus eupeus (Lesser Asian scorpion).